A 433-amino-acid polypeptide reads, in one-letter code: Protein translocase subunit SecY (433 aa).

The next 10 helical transmembrane spans lie at 17–37 (IIFTIFVLIICRFGSFIPIAG), 71–91 (IFALAIMPYITASIIIQLMSV), 117–137 (LTVLLASLQAYGVAVSLESIV), 141–161 (GPVVIIPGLFFKITTVITLVV), 184–204 (LIIFIGIISGVPSAIISMFEL), 212–232 (PLVAIAVCAGVVILISIIIFF), 268–288 (GVIPPIFASSILLFPATLANF), 309–329 (IYILLYVALIMFFSFFYTAIV), 366–386 (LTVVGGIYLSVICIIPELLMN), and 388–408 (YVISLSLGGTSFLIVVNVVLD).

This sequence belongs to the SecY/SEC61-alpha family. Component of the Sec protein translocase complex. Heterotrimer consisting of SecY, SecE and SecG subunits. The heterotrimers can form oligomers, although 1 heterotrimer is thought to be able to translocate proteins. Interacts with the ribosome. Interacts with SecDF, and other proteins may be involved. Interacts with SecA.

Its subcellular location is the cell inner membrane. In terms of biological role, the central subunit of the protein translocation channel SecYEG. Consists of two halves formed by TMs 1-5 and 6-10. These two domains form a lateral gate at the front which open onto the bilayer between TMs 2 and 7, and are clamped together by SecE at the back. The channel is closed by both a pore ring composed of hydrophobic SecY resides and a short helix (helix 2A) on the extracellular side of the membrane which forms a plug. The plug probably moves laterally to allow the channel to open. The ring and the pore may move independently. This chain is Protein translocase subunit SecY, found in Rickettsia bellii (strain RML369-C).